The chain runs to 470 residues: Argininosuccinate lyase (470 aa).

Belongs to the lyase 1 family. Argininosuccinate lyase subfamily.

The protein localises to the cytoplasm. It carries out the reaction 2-(N(omega)-L-arginino)succinate = fumarate + L-arginine. Its pathway is amino-acid biosynthesis; L-arginine biosynthesis; L-arginine from L-ornithine and carbamoyl phosphate: step 3/3. This is Argininosuccinate lyase from Mycobacterium marinum (strain ATCC BAA-535 / M).